The following is a 62-amino-acid chain: MAENGKTVQVTQIASVIGRKPGQAETITGLGLRGIGSTRTLEDTPAVRGMIRKVAHLIKVEG.

The protein belongs to the universal ribosomal protein uL30 family. As to quaternary structure, part of the 50S ribosomal subunit.

This chain is Large ribosomal subunit protein uL30, found in Gluconobacter oxydans (strain 621H) (Gluconobacter suboxydans).